Consider the following 89-residue polypeptide: Large ribosomal subunit protein bL27 (89 aa).

Belongs to the bacterial ribosomal protein bL27 family.

This Synechococcus sp. (strain JA-3-3Ab) (Cyanobacteria bacterium Yellowstone A-Prime) protein is Large ribosomal subunit protein bL27.